The sequence spans 177 residues: Adenine phosphoribosyltransferase (177 aa).

Belongs to the purine/pyrimidine phosphoribosyltransferase family. Homodimer.

Its subcellular location is the cytoplasm. The catalysed reaction is AMP + diphosphate = 5-phospho-alpha-D-ribose 1-diphosphate + adenine. Its pathway is purine metabolism; AMP biosynthesis via salvage pathway; AMP from adenine: step 1/1. Its function is as follows. Catalyzes a salvage reaction resulting in the formation of AMP, that is energically less costly than de novo synthesis. In Leptospira borgpetersenii serovar Hardjo-bovis (strain JB197), this protein is Adenine phosphoribosyltransferase.